A 201-amino-acid polypeptide reads, in one-letter code: ATP-dependent Clp protease proteolytic subunit (201 aa).

Ser101 acts as the Nucleophile in catalysis. Residue His126 is part of the active site.

This sequence belongs to the peptidase S14 family. Component of the chloroplastic Clp protease core complex.

It localises to the plastid. Its subcellular location is the chloroplast stroma. It catalyses the reaction Hydrolysis of proteins to small peptides in the presence of ATP and magnesium. alpha-casein is the usual test substrate. In the absence of ATP, only oligopeptides shorter than five residues are hydrolyzed (such as succinyl-Leu-Tyr-|-NHMec, and Leu-Tyr-Leu-|-Tyr-Trp, in which cleavage of the -Tyr-|-Leu- and -Tyr-|-Trp bonds also occurs).. Functionally, cleaves peptides in various proteins in a process that requires ATP hydrolysis. Has a chymotrypsin-like activity. Plays a major role in the degradation of misfolded proteins. In Chaetosphaeridium globosum (Charophycean green alga), this protein is ATP-dependent Clp protease proteolytic subunit.